The sequence spans 397 residues: L-cysteine desulfidase (397 aa).

Catalysis depends on Cys-23, which acts as the Proton acceptor. Positions 288, 330, and 337 each coordinate [4Fe-4S] cluster.

Belongs to the L-cysteine desulfidase family. As to quaternary structure, homotrimer. Requires [4Fe-4S] cluster as cofactor.

The enzyme catalyses L-cysteine + H2O = hydrogen sulfide + pyruvate + NH4(+) + H(+). Catalyzes the cleavage of L-cysteine to form 2-aminoprop-2-enoate and sulfide. The former then spontaneously hydrolyzes to pyruvate and NH(3). May be responsible for the production of sulfide required for the biosynthesis of iron-sulfur centers in this archaea. The polypeptide is L-cysteine desulfidase (Methanococcus maripaludis (strain C5 / ATCC BAA-1333)).